The following is a 241-amino-acid chain: 1-(5-phosphoribosyl)-5-[(5-phosphoribosylamino)methylideneamino] imidazole-4-carboxamide isomerase (241 aa).

The active-site Proton acceptor is Asp8. Asp127 serves as the catalytic Proton donor.

The protein belongs to the HisA/HisF family.

The protein resides in the cytoplasm. The enzyme catalyses 1-(5-phospho-beta-D-ribosyl)-5-[(5-phospho-beta-D-ribosylamino)methylideneamino]imidazole-4-carboxamide = 5-[(5-phospho-1-deoxy-D-ribulos-1-ylimino)methylamino]-1-(5-phospho-beta-D-ribosyl)imidazole-4-carboxamide. Its pathway is amino-acid biosynthesis; L-histidine biosynthesis; L-histidine from 5-phospho-alpha-D-ribose 1-diphosphate: step 4/9. This chain is 1-(5-phosphoribosyl)-5-[(5-phosphoribosylamino)methylideneamino] imidazole-4-carboxamide isomerase, found in Thermotoga petrophila (strain ATCC BAA-488 / DSM 13995 / JCM 10881 / RKU-1).